Here is a 226-residue protein sequence, read N- to C-terminus: Lipoprotein-releasing system ATP-binding protein LolD (226 aa).

In terms of domain architecture, ABC transporter spans 6–226 (LKLDNIRRAF…KMSEGLLVEV (221 aa)). Residue 42-49 (GPSGAGKS) coordinates ATP.

It belongs to the ABC transporter superfamily. Lipoprotein translocase (TC 3.A.1.125) family. In terms of assembly, the complex is composed of two ATP-binding proteins (LolD) and two transmembrane proteins (LolC and LolE).

It is found in the cell inner membrane. Its function is as follows. Part of the ABC transporter complex LolCDE involved in the translocation of mature outer membrane-directed lipoproteins, from the inner membrane to the periplasmic chaperone, LolA. Responsible for the formation of the LolA-lipoprotein complex in an ATP-dependent manner. This chain is Lipoprotein-releasing system ATP-binding protein LolD, found in Paramagnetospirillum magneticum (strain ATCC 700264 / AMB-1) (Magnetospirillum magneticum).